The sequence spans 379 residues: Proton extrusion protein PxcA (379 aa).

4 consecutive transmembrane segments (helical) span residues 153 to 173 (TLVS…LQQI), 254 to 274 (AIKN…VCLF), 300 to 320 (FVII…GWTV), and 337 to 357 (FIDL…KYWI).

Belongs to the CemA family.

It is found in the cell inner membrane. Functionally, required for H(+) efflux immediately after light irradiation to form a rapid H(+) concentration gradient across the thylakoid membranes. Together with PxcL, contributes to transient H(+) uptake following dark to light transition. The sequence is that of Proton extrusion protein PxcA from Synechococcus sp. (strain RCC307).